The chain runs to 379 residues: Homoserine O-succinyltransferase (379 aa).

One can recognise an AB hydrolase-1 domain in the interval 48–357 (NAVLICHALS…SAHGHDAFLM (310 aa)). Serine 154 acts as the Nucleophile in catalysis. Arginine 224 lines the substrate pocket. Residues aspartate 319 and histidine 352 contribute to the active site. Residue aspartate 353 coordinates substrate.

It belongs to the AB hydrolase superfamily. MetX family. As to quaternary structure, homodimer.

It is found in the cytoplasm. The catalysed reaction is L-homoserine + succinyl-CoA = O-succinyl-L-homoserine + CoA. Its pathway is amino-acid biosynthesis; L-methionine biosynthesis via de novo pathway; O-succinyl-L-homoserine from L-homoserine: step 1/1. With respect to regulation, activity increases in the presence of MetW. Its function is as follows. Transfers a succinyl group from succinyl-CoA to L-homoserine, forming succinyl-L-homoserine. The sequence is that of Homoserine O-succinyltransferase from Neisseria gonorrhoeae.